Reading from the N-terminus, the 91-residue chain is Probable Fe(2+)-trafficking protein (91 aa).

It belongs to the Fe(2+)-trafficking protein family.

Its function is as follows. Could be a mediator in iron transactions between iron acquisition and iron-requiring processes, such as synthesis and/or repair of Fe-S clusters in biosynthetic enzymes. This chain is Probable Fe(2+)-trafficking protein, found in Paraburkholderia phymatum (strain DSM 17167 / CIP 108236 / LMG 21445 / STM815) (Burkholderia phymatum).